A 754-amino-acid chain; its full sequence is Circadian input-output histidine kinase CikA (754 aa).

An N-terminal domain, not required to complement the deletion strain region spans residues 1-183 (MLAPSSNCSL…QVSAQIRLSL (183 aa)). Residues 184 to 338 (DLSEILTTTI…RDILQHLAEH (155 aa)) are GAF domain, required to complement the deletion strain. One can recognise a Histidine kinase domain in the interval 390 to 611 (TMSHELRTPL…TFTVWIPEQT (222 aa)). His-393 carries the post-translational modification Phosphohistidine; by autocatalysis. The interval 606-754 (WIPEQTLIEP…NLSEGDRPSS (149 aa)) is psR domain, required to complement the deletion strain and for cell pole localization, attenuates autophosphorylation activity. Binds KaiB(fs). Residues 629 to 742 (HILLLEEEDE…LLLTTLQGLC (114 aa)) form the Response regulatory domain.

In the N-terminal section; belongs to the phytochrome family. Homodimer. Part of the circadian clock (KaiA, KaiB, KaiC, CikA, RpaA, SasA), the composition of which varies during the circadian cycle. Interacts with LdpA. KaiA and CikA compete for binding to KaiB(fs).

It is found in the cytoplasm. Its subcellular location is the membrane. It carries out the reaction ATP + protein L-histidine = ADP + protein N-phospho-L-histidine.. Functions in an input pathway to the Kai circadian clock. Senses oxidized quinones via its C-terminal pseudo-receiver domain, providing a link between cell metabolism and the clock. Affects the ratio of phosphorylated to unphosphorylated KaiC, binds quinones via its pseudo-receptor domain. Quinone-binding destabilizes the protein rapidly. Autophosphorylates, does not transfer the phosphate to its pseudo-receiver (PsR) domain. May play a role in cell division, as suggested by its polar location and increased cell length in a deletion strain. Its function is as follows. Member of the two-component regulatory system CikA/RpaA output pathway from the circadian clock, negatively regulating kaiBC expression independently of labA and of sasA. One of three clock output pathways. Dephosphorylates phospho-RpaA, enhanced by KaiB and KaiC, has only modest kinase activity on RpaA. A very robust clock is reconstituted with KaiA, KaiB, KaiC, SasA, CikA and RpaA; output is measured by transcription from an appropriate reporter. This Synechococcus elongatus (strain ATCC 33912 / PCC 7942 / FACHB-805) (Anacystis nidulans R2) protein is Circadian input-output histidine kinase CikA.